Consider the following 168-residue polypeptide: G/U mismatch-specific DNA glycosylase (168 aa).

Belongs to the uracil-DNA glycosylase (UDG) superfamily. TDG/mug family. Binds DNA as a monomer.

It is found in the cytoplasm. The catalysed reaction is Specifically hydrolyzes mismatched double-stranded DNA and polynucleotides, releasing free uracil.. In terms of biological role, excises ethenocytosine and uracil, which can arise by alkylation or deamination of cytosine, respectively, from the corresponding mispairs with guanine in ds-DNA. It is capable of hydrolyzing the carbon-nitrogen bond between the sugar-phosphate backbone of the DNA and the mispaired base. The complementary strand guanine functions in substrate recognition. Required for DNA damage lesion repair in stationary-phase cells. The polypeptide is G/U mismatch-specific DNA glycosylase (Shigella dysenteriae serotype 1 (strain Sd197)).